Here is a 627-residue protein sequence, read N- to C-terminus: tRNA uridine 5-carboxymethylaminomethyl modification enzyme MnmG (627 aa).

FAD-binding positions include 13 to 18 (GGGHAG), Val125, and Ser180. 274 to 288 (GPRYCPSIEDKVVRF) provides a ligand contact to NAD(+). Gln371 contributes to the FAD binding site.

It belongs to the MnmG family. As to quaternary structure, homodimer. Heterotetramer of two MnmE and two MnmG subunits. Requires FAD as cofactor.

The protein localises to the cytoplasm. Its function is as follows. NAD-binding protein involved in the addition of a carboxymethylaminomethyl (cmnm) group at the wobble position (U34) of certain tRNAs, forming tRNA-cmnm(5)s(2)U34. This chain is tRNA uridine 5-carboxymethylaminomethyl modification enzyme MnmG, found in Francisella tularensis subsp. holarctica (strain FTNF002-00 / FTA).